The sequence spans 66 residues: DNA gyrase inhibitor YacG (66 aa).

Positions 9, 12, 28, and 32 each coordinate Zn(2+). The tract at residues His45–His66 is disordered.

It belongs to the DNA gyrase inhibitor YacG family. Interacts with GyrB. Zn(2+) serves as cofactor.

Functionally, inhibits all the catalytic activities of DNA gyrase by preventing its interaction with DNA. Acts by binding directly to the C-terminal domain of GyrB, which probably disrupts DNA binding by the gyrase. In Pseudomonas putida (strain ATCC 47054 / DSM 6125 / CFBP 8728 / NCIMB 11950 / KT2440), this protein is DNA gyrase inhibitor YacG.